The following is a 343-amino-acid chain: 4-hydroxy-2-oxovalerate aldolase 2 (343 aa).

The Pyruvate carboxyltransferase domain maps to Ile8–Ser260. Arg16 to Asp17 is a substrate binding site. Asp17 lines the Mn(2+) pocket. The active-site Proton acceptor is His20. The substrate site is built by Ser170 and His199. Residues His199 and His201 each contribute to the Mn(2+) site. Position 290 (Tyr290) interacts with substrate.

The protein belongs to the 4-hydroxy-2-oxovalerate aldolase family.

It catalyses the reaction (S)-4-hydroxy-2-oxopentanoate = acetaldehyde + pyruvate. The sequence is that of 4-hydroxy-2-oxovalerate aldolase 2 from Burkholderia lata (strain ATCC 17760 / DSM 23089 / LMG 22485 / NCIMB 9086 / R18194 / 383).